The primary structure comprises 763 residues: Transferrin receptor protein 1 (763 aa).

Over 1-67 (MMDQARSAFS…KPKRFNGRLC (67 aa)) the chain is Cytoplasmic. A mediates interaction with SH3BP4 region spans residues 1–67 (MMDQARSAFS…KPKRFNGRLC (67 aa)). Phosphoserine is present on residues serine 10 and serine 19. Tyrosine 20 is subject to Phosphotyrosine. Positions 20-23 (YTRF) match the Endocytosis signal motif. Threonine 21 is modified (phosphothreonine). Serine 24 carries the phosphoserine modification. Positions 58–61 (KPKR) match the Stop-transfer sequence motif. A lipid anchor (S-palmitoyl cysteine) is attached at cysteine 67. Residues 68–88 (FAAIALVIFFLIGFMSGYLGY) traverse the membrane as a helical; Signal-anchor for type II membrane protein segment. Residues 89–763 (CKRVEQKEEC…GDIWNIDNEF (675 aa)) are Extracellular-facing. Threonine 104 carries O-linked (GalNAc...) threonine glycosylation. The PA domain maps to 225 to 315 (SKPTEVSGKL…GTGDPYTPGF (91 aa)). Residues asparagine 253 and asparagine 319 are each glycosylated (N-linked (GlcNAc...) asparagine). Residues 572–763 (RLDTYEALTQ…GDIWNIDNEF (192 aa)) are ligand-binding. The Cell attachment site motif lies at 649–651 (RGD). 2 N-linked (GlcNAc...) asparagine glycosylation sites follow: asparagine 725 and asparagine 730.

This sequence belongs to the peptidase M28 family. M28B subfamily. In terms of assembly, homodimer; disulfide-linked. Binds one transferrin molecule per subunit. Interacts with SH3BP4. Interacts with STEAP3; facilitates TFRC endocytosis in erythroid precursor cells. Post-translationally, stearoylated by ZDHHC6 which inhibits TFRC-mediated activation of the JNK pathway and promotes mitochondrial fragmentation. Stearoylation does not affect iron uptake. In terms of processing, N- and O-glycosylated, phosphorylated and palmitoylated.

It is found in the cell membrane. The protein localises to the melanosome. Functionally, cellular uptake of iron occurs via receptor-mediated endocytosis of ligand-occupied transferrin receptor into specialized endosomes. Endosomal acidification leads to iron release. The apotransferrin-receptor complex is then recycled to the cell surface with a return to neutral pH and the concomitant loss of affinity of apotransferrin for its receptor. Transferrin receptor is necessary for development of erythrocytes and the nervous system. Upon stimulation, positively regulates T and B cell proliferation through iron uptake. Acts as a lipid sensor that regulates mitochondrial fusion by regulating activation of the JNK pathway. When dietary levels of stearate (C18:0) are low, promotes activation of the JNK pathway, resulting in HUWE1-mediated ubiquitination and subsequent degradation of the mitofusin MFN2 and inhibition of mitochondrial fusion. When dietary levels of stearate (C18:0) are high, TFRC stearoylation inhibits activation of the JNK pathway and thus degradation of the mitofusin MFN2. Mediates uptake of NICOL1 into fibroblasts where it may regulate extracellular matrix production. This Mus musculus (Mouse) protein is Transferrin receptor protein 1 (Tfrc).